The following is a 329-amino-acid chain: Delta-aminolevulinic acid dehydratase (329 aa).

Positions 122, 124, and 132 each coordinate Zn(2+). Lys199 functions as the Schiff-base intermediate with substrate in the catalytic mechanism. Residues Arg209 and Arg221 each coordinate 5-aminolevulinate. The active-site Schiff-base intermediate with substrate is Lys252. 5-aminolevulinate is bound by residues Ser279 and Tyr318.

Belongs to the ALAD family. As to quaternary structure, homooctamer. Zn(2+) serves as cofactor.

The enzyme catalyses 2 5-aminolevulinate = porphobilinogen + 2 H2O + H(+). Its pathway is porphyrin-containing compound metabolism; protoporphyrin-IX biosynthesis; coproporphyrinogen-III from 5-aminolevulinate: step 1/4. Its function is as follows. Catalyzes an early step in the biosynthesis of tetrapyrroles. Binds two molecules of 5-aminolevulinate per subunit, each at a distinct site, and catalyzes their condensation to form porphobilinogen. This chain is Delta-aminolevulinic acid dehydratase (hem2), found in Schizosaccharomyces pombe (strain 972 / ATCC 24843) (Fission yeast).